The primary structure comprises 634 residues: Probable potassium transport system protein Kup (634 aa).

The next 12 membrane-spanning stretches (helical) occupy residues 21-41, 58-78, 110-130, 152-172, 179-199, 223-243, 258-278, 296-316, 348-368, 377-397, 403-423, and 427-447; these read LVIGAIGVVFGDIGTSPLYTL, VLGILSLVFWALMLVVTLKYV, MYVVGILGIFGASLFFGDGVI, PFVVPITLVVLGMLFLAQRFG, AFGPITLLWFFALGAIGVYNM, WHAVFVLGAVVLAVTGGEALY, WQFVVLPMLTLTYLGQGALML, ALYPMIVLATAATVIASQALI, IYVPAVNWCLLALVAVAVIGF, AYGVSVTGTMLITTVLMIIYA, VPAPLLWLFALVFLAVDCAFF, and IIKFLDGAWFPLLLGLILFTL.

The protein belongs to the HAK/KUP transporter (TC 2.A.72) family.

It localises to the cell inner membrane. It carries out the reaction K(+)(in) + H(+)(in) = K(+)(out) + H(+)(out). In terms of biological role, transport of potassium into the cell. Likely operates as a K(+):H(+) symporter. The sequence is that of Probable potassium transport system protein Kup from Xanthomonas euvesicatoria pv. vesicatoria (strain 85-10) (Xanthomonas campestris pv. vesicatoria).